The sequence spans 272 residues: 3',5'-cyclic adenosine monophosphate phosphodiesterase CpdA (272 aa).

The Fe cation site is built by Asp-21, His-23, Asp-63, Asn-93, His-161, His-200, and His-202. Residues His-23, Asp-63, and 93–94 (NH) each bind AMP. His-202 lines the AMP pocket.

The protein belongs to the cyclic nucleotide phosphodiesterase class-III family. As to quaternary structure, monomer. Requires a divalent metal cation as cofactor.

It catalyses the reaction 3',5'-cyclic AMP + H2O = AMP + H(+). Activated by iron. Other divalent metal ions have no effect. Functionally, hydrolyzes cAMP to 5'-AMP. Plays an important regulatory role in modulating the intracellular concentration of cAMP, thereby influencing cAMP-dependent processes. Specifically required for regulation of virulence factors. Can also hydrolyze cGMP, but cGMP is unlikely to be synthesized by P.aeruginosa and cAMP is probably the biologically relevant substrate for CpdA in vivo. The polypeptide is 3',5'-cyclic adenosine monophosphate phosphodiesterase CpdA (Pseudomonas aeruginosa).